A 93-amino-acid chain; its full sequence is UPF0358 protein lmo1070 (93 aa).

It belongs to the UPF0358 family.

The chain is UPF0358 protein lmo1070 from Listeria monocytogenes serovar 1/2a (strain ATCC BAA-679 / EGD-e).